The chain runs to 393 residues: Demethylspheroidene O-methyltransferase (393 aa).

The interval 1 to 36 (MPKDDHTGATADRTAQPTGTGKQPLVPGQPGAAPVQ) is disordered. Over residues 26-36 (VPGQPGAAPVQ) the composition is skewed to low complexity. D259 and R297 together coordinate S-adenosyl-L-methionine.

It belongs to the class I-like SAM-binding methyltransferase superfamily. Cation-independent O-methyltransferase family.

It catalyses the reaction demethylspheroidene + S-adenosyl-L-methionine = spheroidene + S-adenosyl-L-homocysteine + H(+). It participates in carotenoid biosynthesis; spheroidene biosynthesis. In terms of biological role, methyltransferase that mediates the O-methylation of 1-hydroxy carotenoids. Converts hydroxyneurosporene to methoxyneurosporene or demethylspheroidene to spheroidene. Also able to produce spirilloxanthin. This Rhodobacter capsulatus (strain ATCC BAA-309 / NBRC 16581 / SB1003) protein is Demethylspheroidene O-methyltransferase (crtF).